Reading from the N-terminus, the 165-residue chain is PTS system glucose-specific EIIA component (165 aa).

The PTS EIIA type-1 domain occupies 34–138 (DPVFAQKMMG…SSITPIIISN (105 aa)). Positions 71 and 86 each coordinate Zn(2+). The Tele-phosphohistidine intermediate; for EIIA activity role is filled by H86. Position 86 is a phosphohistidine; by HPr (H86).

In terms of assembly, heterodimer with glycerol kinase (glpk). It depends on Zn(2+) as a cofactor.

The protein localises to the cytoplasm. Functionally, the phosphoenolpyruvate-dependent sugar phosphotransferase system (sugar PTS), a major carbohydrate active transport system, catalyzes the phosphorylation of incoming sugar substrates concomitantly with their translocation across the cell membrane. The enzyme II complex composed of PtsG and Crr is involved in glucose transport. The polypeptide is PTS system glucose-specific EIIA component (crr) (Oceanobacillus iheyensis (strain DSM 14371 / CIP 107618 / JCM 11309 / KCTC 3954 / HTE831)).